The chain runs to 617 residues: Mitochondrial Rho GTPase 2 (617 aa).

The Cytoplasmic portion of the chain corresponds to 1 to 590 (MKRDVRILLL…LNGSDMSSTS (590 aa)). The Miro 1 domain maps to 2 to 168 (KRDVRILLLG…FYYAQKAVLH (167 aa)). GTP-binding residues include G16, K17, T18, and S19. T18 serves as a coordination point for Mg(2+). Residue D57 participates in Mg(2+) binding. GTP-binding residues include S59, N118, K119, D121, A149, and K150. EF-hand domains follow at residues 184-219 (QCVR…CFGN) and 304-339 (LGHQ…LPYM). Ca(2+) contacts are provided by D197, D199, D201, E208, D317, D319, D321, and E328. The Miro 2 domain occupies 416 to 578 (RTVFLCKVIG…YSKLTWAAMY (163 aa)). GTP-binding residues include G428, G430, K431, and T432. The Mg(2+) site is built by T432 and E474. GTP is bound by residues K528 and D530. Residues 591–613 (FWLRVTLGATIAAMLGFALYRAF) traverse the membrane as a helical; Anchor for type IV membrane protein segment. At 614-617 (SRHK) the chain is on the mitochondrial intermembrane side.

The protein belongs to the mitochondrial Rho GTPase family. Homodimer.

It localises to the mitochondrion outer membrane. It carries out the reaction GTP + H2O = GDP + phosphate + H(+). It catalyses the reaction ATP + H2O = ADP + phosphate + H(+). The catalysed reaction is UTP + H2O = UDP + phosphate + H(+). Its function is as follows. Atypical mitochondrial nucleoside-triphosphatase (NTPase) involved in mitochondrial trafficking. Probably involved in control of anterograde transport of mitochondria and their subcellular distribution. Can hydrolyze GTP, ATP and UTP. The chain is Mitochondrial Rho GTPase 2 (rhot2) from Danio rerio (Zebrafish).